A 360-amino-acid chain; its full sequence is DNA replication and repair protein RecF (360 aa).

30 to 37 (GQNGSGKT) serves as a coordination point for ATP.

The protein belongs to the RecF family.

The protein localises to the cytoplasm. Its function is as follows. The RecF protein is involved in DNA metabolism; it is required for DNA replication and normal SOS inducibility. RecF binds preferentially to single-stranded, linear DNA. It also seems to bind ATP. The protein is DNA replication and repair protein RecF of Shewanella sp. (strain MR-7).